The primary structure comprises 298 residues: Probable endonuclease 4 (298 aa).

Positions 69, 111, 146, 180, 183, 215, 228, 230, and 260 each coordinate Zn(2+).

This sequence belongs to the AP endonuclease 2 family. Requires Zn(2+) as cofactor.

It catalyses the reaction Endonucleolytic cleavage to 5'-phosphooligonucleotide end-products.. In terms of biological role, endonuclease IV plays a role in DNA repair. It cleaves phosphodiester bonds at apurinic or apyrimidinic (AP) sites, generating a 3'-hydroxyl group and a 5'-terminal sugar phosphate. This Bacillus cereus (strain AH187) protein is Probable endonuclease 4.